Reading from the N-terminus, the 290-residue chain is Porphobilinogen deaminase (290 aa).

S-(dipyrrolylmethanemethyl)cysteine is present on C237.

The protein belongs to the HMBS family. Monomer. The cofactor is dipyrromethane.

The enzyme catalyses 4 porphobilinogen + H2O = hydroxymethylbilane + 4 NH4(+). Its pathway is porphyrin-containing compound metabolism; protoporphyrin-IX biosynthesis; coproporphyrinogen-III from 5-aminolevulinate: step 2/4. Functionally, tetrapolymerization of the monopyrrole PBG into the hydroxymethylbilane pre-uroporphyrinogen in several discrete steps. This chain is Porphobilinogen deaminase, found in Clostridium botulinum (strain Kyoto / Type A2).